The sequence spans 174 residues: NADH-ubiquinone oxidoreductase chain 6 (174 aa).

A run of 5 helical transmembrane segments spans residues 1 to 21 (MTYV…GFSS), 24 to 44 (SPIY…GIVL), 46 to 66 (FGGS…MLVV), 86 to 106 (VMIL…VVYM), and 151 to 171 (WLMV…IEIT).

It belongs to the complex I subunit 6 family. As to quaternary structure, core subunit of respiratory chain NADH dehydrogenase (Complex I) which is composed of 45 different subunits.

The protein resides in the mitochondrion inner membrane. It carries out the reaction a ubiquinone + NADH + 5 H(+)(in) = a ubiquinol + NAD(+) + 4 H(+)(out). In terms of biological role, core subunit of the mitochondrial membrane respiratory chain NADH dehydrogenase (Complex I) which catalyzes electron transfer from NADH through the respiratory chain, using ubiquinone as an electron acceptor. Essential for the catalytic activity and assembly of complex I. In Oryctolagus cuniculus (Rabbit), this protein is NADH-ubiquinone oxidoreductase chain 6 (MT-ND6).